Here is a 146-residue protein sequence, read N- to C-terminus: MPSKGPLQSVQVFGRKKTATAVAHCKRGNGLIKVNGRPLEMIEPRTLQYKLLEPVLLLGKERFAGVDIRVRVKGGGHVAQIYAIRQSISKALVAYYQKYVDEASKKEIKDILIQYDRTLLVADPRRCESKKFGGPGARARYQKSYR.

Ser3 bears the Phosphoserine mark. Position 60 is an N6-acetyllysine (Lys60).

This sequence belongs to the universal ribosomal protein uS9 family. In terms of assembly, component of the small ribosomal subunit. Part of the small subunit (SSU) processome, composed of more than 70 proteins and the RNA chaperone small nucleolar RNA (snoRNA) U3.

The protein localises to the cytoplasm. It is found in the nucleus. Its subcellular location is the nucleolus. In terms of biological role, component of the small ribosomal subunit. The ribosome is a large ribonucleoprotein complex responsible for the synthesis of proteins in the cell. Part of the small subunit (SSU) processome, first precursor of the small eukaryotic ribosomal subunit. During the assembly of the SSU processome in the nucleolus, many ribosome biogenesis factors, an RNA chaperone and ribosomal proteins associate with the nascent pre-rRNA and work in concert to generate RNA folding, modifications, rearrangements and cleavage as well as targeted degradation of pre-ribosomal RNA by the RNA exosome. The polypeptide is Small ribosomal subunit protein uS9 (RPS16) (Bos taurus (Bovine)).